Reading from the N-terminus, the 323-residue chain is MAQEYTVEQLNHGRKVYDFMRWDYWAFGISGLLLIAAIVIMGVRGFNWGLDFTGGTVIEITLEKPAEIDVMRDALQKAGFEEPMLQNFGSSHDIMVRMPPAEGETGGQVLGSQVLKVINESTNQNAAVKRIEFVGPSVGADLAQTGAMALMAALLSILVYVGFRFEWRLAAGVVIALAHDVIITLGILSLFHIEIDLTIVASLMSVIGYSLNDSIVVSDRIRENFRKIRRGTPYEIFNVSLTQTLHRTLITSGTTLMVILMLYLFGGPVLEGFSLTMLIGVSIGTASSIYVASALALKLGMKREHMLQQKVEKEGADQPSILP.

The Cytoplasmic portion of the chain corresponds to 1–22; sequence MAQEYTVEQLNHGRKVYDFMRW. Residues 23-43 traverse the membrane as a helical segment; that stretch reads DYWAFGISGLLLIAAIVIMGV. The Periplasmic portion of the chain corresponds to 44-142; the sequence is RGFNWGLDFT…FVGPSVGADL (99 aa). The helical transmembrane segment at 143–163 threads the bilayer; it reads AQTGAMALMAALLSILVYVGF. Over 164–170 the chain is Cytoplasmic; the sequence is RFEWRLA. A helical transmembrane segment spans residues 171–191; the sequence is AGVVIALAHDVIITLGILSLF. The Periplasmic segment spans residues 192-196; the sequence is HIEID. The helical transmembrane segment at 197 to 217 threads the bilayer; the sequence is LTIVASLMSVIGYSLNDSIVV. Residues 218 to 247 are Cytoplasmic-facing; that stretch reads SDRIRENFRKIRRGTPYEIFNVSLTQTLHR. The helical transmembrane segment at 248–270 threads the bilayer; the sequence is TLITSGTTLMVILMLYLFGGPVL. Residues 271–280 lie on the Periplasmic side of the membrane; that stretch reads EGFSLTMLIG. Residues 281–301 traverse the membrane as a helical segment; the sequence is VSIGTASSIYVASALALKLGM. Over 302 to 323 the chain is Cytoplasmic; sequence KREHMLQQKVEKEGADQPSILP.

This sequence belongs to the SecD/SecF family. SecF subfamily. As to quaternary structure, forms a complex with SecD. Part of the essential Sec protein translocation apparatus which comprises SecA, SecYEG and auxiliary proteins SecDF-YajC and YidC.

The protein resides in the cell inner membrane. In terms of biological role, part of the Sec protein translocase complex. Interacts with the SecYEG preprotein conducting channel. SecDF uses the proton motive force (PMF) to complete protein translocation after the ATP-dependent function of SecA. The sequence is that of Protein translocase subunit SecF from Escherichia coli O157:H7.